Reading from the N-terminus, the 115-residue chain is uncharacterized protein (115 aa).

The span at 90-100 (THFGRPATRRR) shows a compositional bias: basic residues. The tract at residues 90-115 (THFGRPATRRRPLGEREVNPSARSLG) is disordered.

This is an uncharacterized protein from Saccharomyces cerevisiae (strain ATCC 204508 / S288c) (Baker's yeast).